We begin with the raw amino-acid sequence, 77 residues long: U8-lycotoxin-Ls1n (77 aa).

The first 20 residues, 1–20, serve as a signal peptide directing secretion; sequence MKLMIFTGLVLFAIVSLIEA. Residues 21 to 26 constitute a propeptide that is removed on maturation; sequence QAENEK.

Belongs to the neurotoxin 19 (CSTX) family. 08 (U8-Lctx) subfamily. Contains 4 disulfide bonds. Expressed by the venom gland.

Its subcellular location is the secreted. The polypeptide is U8-lycotoxin-Ls1n (Lycosa singoriensis (Wolf spider)).